We begin with the raw amino-acid sequence, 244 residues long: Haloacid dehalogenase-like hydrolase domain-containing protein Sgpp (244 aa).

The active-site Nucleophile is Asp28. Asp28, Asp30, and Asp189 together coordinate Mg(2+). Asp30 (proton donor) is an active-site residue.

Belongs to the HAD-like hydrolase superfamily. DOG/GPP family. Requires Mg(2+) as cofactor. In terms of tissue distribution, ubiquitous with highest expression in flowers.

Its function is as follows. Acts as a phosphosugar phosphatase on a broad range of sugar phosphate substrates with preferential activity on D-ribose-5-phosphate, 2-deoxy-D-ribose-5-phosphate, 2-deoxy-D-glucose-6-phosphate, and D-mannose-6-phosphate and with a lower activity on D-fructose-1-phosphate, D-glucose-6-phosphate, DL-glycerol-3-phosphate, and D-fructose-6-phosphate. This chain is Haloacid dehalogenase-like hydrolase domain-containing protein Sgpp (SGPP), found in Arabidopsis thaliana (Mouse-ear cress).